The sequence spans 1020 residues: Phosphatidylinositol 3-kinase VPS34 (1020 aa).

Residues 49–210 (LSTKFEDPTV…NWLDKMVLPK (162 aa)) enclose the C2 PI3K-type domain. The PIK helical domain occupies 331–577 (DKELKPTPQL…DGPIKIYMDI (247 aa)). The PI3K/PI4K catalytic domain maps to 666 to 1004 (YPEESSVFKS…LINDSVNAFL (339 aa)). The segment at 672-678 (VFKSSLA) is G-loop. The interval 873–881 (GVGDRHLDN) is catalytic loop. An activation loop region spans residues 892–913 (HADFGYILGRDPKPFPPLMKLP).

The protein belongs to the PI3/PI4-kinase family. In terms of assembly, component of the autophagy-specific VPS34 PI3-kinase complex I composed of at least VPS15, VPS30, VPS34, and of the VPS34 PI3-kinase complex II composed of VPS15, VPS30, VPS34 and VPS38. Interacts with VMNA7. Post-translationally, autophosphorylated.

The protein localises to the golgi apparatus. It is found in the trans-Golgi network membrane. The protein resides in the endosome membrane. It catalyses the reaction a 1,2-diacyl-sn-glycero-3-phospho-(1D-myo-inositol) + ATP = a 1,2-diacyl-sn-glycero-3-phospho-(1D-myo-inositol-3-phosphate) + ADP + H(+). Multifunctional phosphatidylinositol 3-kinase involved in acidification of vacuoles, pH-dependent cell growth, and autophagocytosis. Plays an important role in protein transport and virulence. Component of the autophagy-specific VPS34 PI3-kinase complex I essential to recruit the ATG8-phosphatidylinositol conjugate and the ATG12-ATG5 conjugate to the pre-autophagosomal structure. Also involved in endosome-to-Golgi retrograde transport as part of the VPS34 PI3-kinase complex II. This second complex is required for the endosome-to-Golgi retrieval of PEP1 and KEX2, and the recruitment of VPS5 and VPS7, two components of the retromer complex, to endosomal membranes (probably through the synthesis of a specific pool of phosphatidylinositol 3-phosphate recruiting the retromer to the endosomes). Finally, it might also be involved in ethanol tolerance and cell wall integrity. The protein is Phosphatidylinositol 3-kinase VPS34 of Candida albicans (Yeast).